The following is a 169-amino-acid chain: Peptide methionine sulfoxide reductase MsrA (169 aa).

Cysteine 10 is a catalytic residue.

It belongs to the MsrA Met sulfoxide reductase family.

It carries out the reaction L-methionyl-[protein] + [thioredoxin]-disulfide + H2O = L-methionyl-(S)-S-oxide-[protein] + [thioredoxin]-dithiol. The catalysed reaction is [thioredoxin]-disulfide + L-methionine + H2O = L-methionine (S)-S-oxide + [thioredoxin]-dithiol. Its function is as follows. Has an important function as a repair enzyme for proteins that have been inactivated by oxidation. Catalyzes the reversible oxidation-reduction of methionine sulfoxide in proteins to methionine. The protein is Peptide methionine sulfoxide reductase MsrA of Streptococcus pyogenes serotype M1.